Here is a 344-residue protein sequence, read N- to C-terminus: Phenylalanine--tRNA ligase alpha subunit (344 aa).

Position 255 (glutamate 255) interacts with Mg(2+).

It belongs to the class-II aminoacyl-tRNA synthetase family. Phe-tRNA synthetase alpha subunit type 1 subfamily. As to quaternary structure, tetramer of two alpha and two beta subunits. Requires Mg(2+) as cofactor.

It localises to the cytoplasm. The enzyme catalyses tRNA(Phe) + L-phenylalanine + ATP = L-phenylalanyl-tRNA(Phe) + AMP + diphosphate + H(+). The chain is Phenylalanine--tRNA ligase alpha subunit from Phocaeicola vulgatus (strain ATCC 8482 / DSM 1447 / JCM 5826 / CCUG 4940 / NBRC 14291 / NCTC 11154) (Bacteroides vulgatus).